We begin with the raw amino-acid sequence, 31 residues long: Photosystem II reaction center protein T (31 aa).

A helical transmembrane segment spans residues S3–F23.

The protein belongs to the PsbT family. In terms of assembly, PSII is composed of 1 copy each of membrane proteins PsbA, PsbB, PsbC, PsbD, PsbE, PsbF, PsbH, PsbI, PsbJ, PsbK, PsbL, PsbM, PsbT, PsbX, PsbY, PsbZ, Psb30/Ycf12, peripheral proteins PsbO, CyanoQ (PsbQ), PsbU, PsbV and a large number of cofactors. It forms dimeric complexes.

The protein resides in the cellular thylakoid membrane. Found at the monomer-monomer interface of the photosystem II (PS II) dimer, plays a role in assembly and dimerization of PSII. PSII is a light-driven water plastoquinone oxidoreductase, using light energy to abstract electrons from H(2)O, generating a proton gradient subsequently used for ATP formation. The polypeptide is Photosystem II reaction center protein T (Rippkaea orientalis (strain PCC 8801 / RF-1) (Cyanothece sp. (strain PCC 8801))).